Consider the following 396-residue polypeptide: Subtilisin-like protease 5 (396 aa).

Positions 1–20 (MTGFFTILSFSLAALSVTNA) are cleaved as a signal peptide. Residues 21 to 116 (AQILSVPKGA…VEPDAIISQH (96 aa)) constitute a propeptide that is removed on maturation. The Inhibitor I9 domain occupies 37–113 (YIVVMKDDTS…VAFVEPDAII (77 aa)). N-linked (GlcNAc...) asparagine glycosylation occurs at Asn63. The 272-residue stretch at 125-396 (PWGLSRLSNR…SRLLYNGSGR (272 aa)) folds into the Peptidase S8 domain. Active-site charge relay system residues include Asp156 and His187. N-linked (GlcNAc...) asparagine glycans are attached at residues Asn230 and Asn248. The Charge relay system role is filled by Ser342. The segment covering 376 to 389 (PTIRNPGPDTTSRL) has biased composition (polar residues). The disordered stretch occupies residues 376–396 (PTIRNPGPDTTSRLLYNGSGR). Asn392 is a glycosylation site (N-linked (GlcNAc...) asparagine).

It belongs to the peptidase S8 family.

It is found in the secreted. Secreted subtilisin-like serine protease with keratinolytic activity that contributes to pathogenicity. The polypeptide is Subtilisin-like protease 5 (SUB5) (Trichophyton verrucosum (Cattle ringworm fungus)).